The sequence spans 109 residues: Large ribosomal subunit protein uL22 (109 aa).

Belongs to the universal ribosomal protein uL22 family. In terms of assembly, part of the 50S ribosomal subunit.

Functionally, this protein binds specifically to 23S rRNA; its binding is stimulated by other ribosomal proteins, e.g. L4, L17, and L20. It is important during the early stages of 50S assembly. It makes multiple contacts with different domains of the 23S rRNA in the assembled 50S subunit and ribosome. The globular domain of the protein is located near the polypeptide exit tunnel on the outside of the subunit, while an extended beta-hairpin is found that lines the wall of the exit tunnel in the center of the 70S ribosome. This is Large ribosomal subunit protein uL22 from Paraburkholderia xenovorans (strain LB400).